Consider the following 553-residue polypeptide: HTH-type transcriptional regulator SgrR (553 aa).

Residues 1–117 (MSTARLQQQF…LSQLGRSFRQ (117 aa)) form the HTH marR-type domain. A DNA-binding region (H-T-H motif) is located at residues 26–49 (LQELAEVLCCSRRHVRSLLGSMQQ). The segment at 163–494 (ELEPDLSHHW…EELHQDVELW (332 aa)) is solute-binding.

In terms of biological role, activates the small RNA gene sgrS under glucose-phosphate stress conditions as well as yfdZ. Represses its own transcription under both stress and non-stress conditions. Might act as a sensor of the intracellular accumulation of phosphoglucose by binding these molecules in its C-terminal solute-binding domain. The polypeptide is HTH-type transcriptional regulator SgrR (Yersinia enterocolitica serotype O:8 / biotype 1B (strain NCTC 13174 / 8081)).